A 321-amino-acid chain; its full sequence is Cytochrome f (321 aa).

The signal sequence occupies residues 1–35; the sequence is MQNRKTYDDWVKKWITQSISVLIMIDIMTRTSIAN. Heme-binding residues include Tyr-37, Cys-57, Cys-60, and His-61. Residues 287-307 form a helical membrane-spanning segment; that stretch reads VQGLLLFLASVVLAQIFLVLK.

It belongs to the cytochrome f family. As to quaternary structure, the 4 large subunits of the cytochrome b6-f complex are cytochrome b6, subunit IV (17 kDa polypeptide, petD), cytochrome f and the Rieske protein, while the 4 small subunits are PetG, PetL, PetM and PetN. The complex functions as a dimer. Heme serves as cofactor.

The protein localises to the plastid. It is found in the chloroplast thylakoid membrane. Functionally, component of the cytochrome b6-f complex, which mediates electron transfer between photosystem II (PSII) and photosystem I (PSI), cyclic electron flow around PSI, and state transitions. The sequence is that of Cytochrome f from Cryptomeria japonica (Japanese cedar).